The sequence spans 359 residues: Peptide chain release factor 1 (359 aa).

An N5-methylglutamine modification is found at Gln232.

It belongs to the prokaryotic/mitochondrial release factor family. In terms of processing, methylated by PrmC. Methylation increases the termination efficiency of RF1.

The protein localises to the cytoplasm. Functionally, peptide chain release factor 1 directs the termination of translation in response to the peptide chain termination codons UAG and UAA. The protein is Peptide chain release factor 1 of Lawsonia intracellularis (strain PHE/MN1-00).